The chain runs to 227 residues: PKHD-type hydroxylase Swit_4046 (227 aa).

Positions 78-178 constitute a Fe2OG dioxygenase domain; the sequence is KVFPPLFNLY…RLCSFFWIQS (101 aa). Fe cation-binding residues include His96, Asp98, and His159. Arg169 is a 2-oxoglutarate binding site.

The cofactor is Fe(2+). It depends on L-ascorbate as a cofactor.

This chain is PKHD-type hydroxylase Swit_4046, found in Rhizorhabdus wittichii (strain DSM 6014 / CCUG 31198 / JCM 15750 / NBRC 105917 / EY 4224 / RW1) (Sphingomonas wittichii).